The following is a 638-amino-acid chain: Threonine--tRNA ligase (638 aa).

Residues 1–61 (MPNITLPDGS…EADTPLAIVT (61 aa)) form the TGS domain. A catalytic region spans residues 242-533 (DHRKLGRLLD…LIEHYAGALP (292 aa)). Zn(2+)-binding residues include Cys-333, His-384, and His-510.

This sequence belongs to the class-II aminoacyl-tRNA synthetase family. Homodimer. The cofactor is Zn(2+).

It localises to the cytoplasm. The catalysed reaction is tRNA(Thr) + L-threonine + ATP = L-threonyl-tRNA(Thr) + AMP + diphosphate + H(+). Functionally, catalyzes the attachment of threonine to tRNA(Thr) in a two-step reaction: L-threonine is first activated by ATP to form Thr-AMP and then transferred to the acceptor end of tRNA(Thr). Also edits incorrectly charged L-seryl-tRNA(Thr). The polypeptide is Threonine--tRNA ligase (Aromatoleum aromaticum (strain DSM 19018 / LMG 30748 / EbN1) (Azoarcus sp. (strain EbN1))).